Here is a 501-residue protein sequence, read N- to C-terminus: Lysine--tRNA ligase (501 aa).

2 residues coordinate Mg(2+): Glu411 and Glu418.

This sequence belongs to the class-II aminoacyl-tRNA synthetase family. As to quaternary structure, homodimer. Mg(2+) serves as cofactor.

It localises to the cytoplasm. It catalyses the reaction tRNA(Lys) + L-lysine + ATP = L-lysyl-tRNA(Lys) + AMP + diphosphate. This is Lysine--tRNA ligase from Aliivibrio salmonicida (strain LFI1238) (Vibrio salmonicida (strain LFI1238)).